Reading from the N-terminus, the 255-residue chain is Glutamate racemase (255 aa).

Substrate-binding positions include 7–8 and 39–40; these read DS and YG. Catalysis depends on Cys70, which acts as the Proton donor/acceptor. 71 to 72 contributes to the substrate binding site; it reads NT. Residue Cys181 is the Proton donor/acceptor of the active site. Residue 182–183 participates in substrate binding; the sequence is TH.

The protein belongs to the aspartate/glutamate racemases family.

It catalyses the reaction L-glutamate = D-glutamate. Its pathway is cell wall biogenesis; peptidoglycan biosynthesis. Functionally, provides the (R)-glutamate required for cell wall biosynthesis. The protein is Glutamate racemase of Helicobacter pylori (strain G27).